The sequence spans 550 residues: Mitochondrial distribution and morphology protein 34 (550 aa).

One can recognise an SMP-LTD domain in the interval 1–208 (MAFNFNWSPL…CPEQMSKEDH (208 aa)). 3 disordered regions span residues 294-313 (VDKP…LVKS), 358-505 (RNAK…ILEQ), and 519-550 (VYDE…TAAS). A compositionally biased stretch (low complexity) spans 300–310 (SSTTPLTTPSL). Residues 364–376 (ANRKKKTRVVNLR) are compositionally biased toward basic residues. Composition is skewed to polar residues over residues 391-407 (MSDS…TMSD) and 458-467 (AEISQPQVAR). The span at 481–495 (SENDKRSDSKRRGPR) shows a compositional bias: basic and acidic residues.

Belongs to the MDM34 family. As to quaternary structure, component of the ER-mitochondria encounter structure (ERMES) or MDM complex, composed of MMM1, MDM10, MDM12 and MDM34.

The protein resides in the mitochondrion outer membrane. In terms of biological role, component of the ERMES/MDM complex, which serves as a molecular tether to connect the endoplasmic reticulum (ER) and mitochondria. Components of this complex are involved in the control of mitochondrial shape and protein biogenesis, and function in nonvesicular lipid trafficking between the ER and mitochondria. MDM34 is required for the interaction of the ER-resident membrane protein MMM1 and the outer mitochondrial membrane-resident beta-barrel protein MDM10. In Pyricularia oryzae (strain 70-15 / ATCC MYA-4617 / FGSC 8958) (Rice blast fungus), this protein is Mitochondrial distribution and morphology protein 34.